A 60-amino-acid polypeptide reads, in one-letter code: Large ribosomal subunit protein uL30 (60 aa).

It belongs to the universal ribosomal protein uL30 family. Part of the 50S ribosomal subunit.

The chain is Large ribosomal subunit protein uL30 from Streptococcus pneumoniae serotype 2 (strain D39 / NCTC 7466).